Consider the following 173-residue polypeptide: Shikimate kinase 1 (173 aa).

14 to 19 serves as a coordination point for ATP; it reads GAGKST. Ser-18 serves as a coordination point for Mg(2+). Substrate contacts are provided by Asp-36, Arg-60, and Gly-82. Arg-120 provides a ligand contact to ATP. A substrate-binding site is contributed by Arg-140. ATP is bound at residue Gln-157.

It belongs to the shikimate kinase family. Monomer. Requires Mg(2+) as cofactor.

The protein localises to the cytoplasm. The catalysed reaction is shikimate + ATP = 3-phosphoshikimate + ADP + H(+). It participates in metabolic intermediate biosynthesis; chorismate biosynthesis; chorismate from D-erythrose 4-phosphate and phosphoenolpyruvate: step 5/7. In terms of biological role, catalyzes the specific phosphorylation of the 3-hydroxyl group of shikimic acid using ATP as a cosubstrate. The polypeptide is Shikimate kinase 1 (Citrobacter koseri (strain ATCC BAA-895 / CDC 4225-83 / SGSC4696)).